The chain runs to 310 residues: N-acetyl-gamma-glutamyl-phosphate reductase (310 aa).

The active site involves Cys-117.

The protein belongs to the NAGSA dehydrogenase family. Type 2 subfamily.

The protein resides in the cytoplasm. The enzyme catalyses N-acetyl-L-glutamate 5-semialdehyde + phosphate + NADP(+) = N-acetyl-L-glutamyl 5-phosphate + NADPH + H(+). Its pathway is amino-acid biosynthesis; L-arginine biosynthesis; N(2)-acetyl-L-ornithine from L-glutamate: step 3/4. Its function is as follows. Catalyzes the NADPH-dependent reduction of N-acetyl-5-glutamyl phosphate to yield N-acetyl-L-glutamate 5-semialdehyde. This is N-acetyl-gamma-glutamyl-phosphate reductase from Brucella melitensis biotype 1 (strain ATCC 23456 / CCUG 17765 / NCTC 10094 / 16M).